The primary structure comprises 373 residues: Structure-specific endonuclease subunit EME2 (373 aa).

The tract at residues 24-52 is disordered; the sequence is RPQTWEISDSDGEGVPAREVGTQAPSPAG. Residues 47 to 260 are nuclease-like domain; forms the post-nick DNA binding interface and is involved in DNA recognition and bending; sequence APSPAGERRA…LPSKQHRDSQ (214 aa). The helix-hairpin-helix (2HhH); forms the pre-nick DNA binding interface and is involved in DNA recognition and bending stretch occupies residues 282-373; that stretch reads GLRGVWWRQI…NPDLLLDLSS (92 aa).

It belongs to the EME1/MMS4 family. Part of the heterodimeric MUS81-EME2 complex; the complex forms specifically during the DNA replication phase of the cell cycle.

The protein localises to the nucleus. Functionally, non-catalytic subunit of the structure-specific, heterodimeric DNA endonuclease MUS81-EME2 which is involved in the maintenance of genome stability. In the complex, EME2 is required for DNA cleavage, participating in DNA recognition and bending. MUS81-EME2 cleaves 3'-flaps and nicked Holliday junctions, and exhibit limited endonuclease activity with 5' flaps and nicked double-stranded DNAs. MUS81-EME2 which is active during the replication of DNA is more specifically involved in replication fork processing. Replication forks frequently encounter obstacles to their passage, including DNA base lesions, DNA interstrand cross-links, difficult-to-replicate sequences, transcription bubbles, or tightly bound proteins. One mechanism for the restart of a stalled replication fork involves nucleolytic cleavage mediated by the MUS81-EME2 endonuclease. By acting upon the stalled fork, MUS81-EME2 generates a DNA double-strand break (DSB) that can be repaired by homologous recombination, leading to the restoration of an active fork. MUS81-EME2 could also function in telomere maintenance. The polypeptide is Structure-specific endonuclease subunit EME2 (Mus musculus (Mouse)).